We begin with the raw amino-acid sequence, 69 residues long: Putative membrane protein insertion efficiency factor (69 aa).

It belongs to the UPF0161 family.

Its subcellular location is the cell membrane. Its function is as follows. Could be involved in insertion of integral membrane proteins into the membrane. This Alkaliphilus metalliredigens (strain QYMF) protein is Putative membrane protein insertion efficiency factor.